The primary structure comprises 473 residues: Photosystem II CP43 reaction center protein (473 aa).

A propeptide spanning residues 1–14 (MKTLYSRRRFYHVE) is cleaved from the precursor. At threonine 15 the chain carries N-acetylthreonine. Threonine 15 bears the Phosphothreonine mark. 5 helical membrane-spanning segments follow: residues 69–93 (LFEVAHFVPEKPMYEQGLILLPHLA), 134–155 (LLGPETLEESFPFFGYVWKDRN), 178–200 (KALYFGGVYDTWAPGGGDVRKIT), 255–275 (KPFAWARRALVWSGEAYLSYS), and 291–312 (WFNNTAYPSEFYGPTGPEASQA). A [CaMn4O5] cluster-binding site is contributed by glutamate 367. Residues 447 to 471 (RARAAAAGFEKGIDRDFEPVLSMTP) form a helical membrane-spanning segment.

The protein belongs to the PsbB/PsbC family. PsbC subfamily. PSII is composed of 1 copy each of membrane proteins PsbA, PsbB, PsbC, PsbD, PsbE, PsbF, PsbH, PsbI, PsbJ, PsbK, PsbL, PsbM, PsbT, PsbX, PsbY, PsbZ, Psb30/Ycf12, at least 3 peripheral proteins of the oxygen-evolving complex and a large number of cofactors. It forms dimeric complexes. Requires Binds multiple chlorophylls and provides some of the ligands for the Ca-4Mn-5O cluster of the oxygen-evolving complex. It may also provide a ligand for a Cl- that is required for oxygen evolution. PSII binds additional chlorophylls, carotenoids and specific lipids. as cofactor.

The protein localises to the plastid. Its subcellular location is the chloroplast thylakoid membrane. Functionally, one of the components of the core complex of photosystem II (PSII). It binds chlorophyll and helps catalyze the primary light-induced photochemical processes of PSII. PSII is a light-driven water:plastoquinone oxidoreductase, using light energy to abstract electrons from H(2)O, generating O(2) and a proton gradient subsequently used for ATP formation. The protein is Photosystem II CP43 reaction center protein of Solanum bulbocastanum (Wild potato).